The primary structure comprises 355 residues: Uroporphyrinogen decarboxylase (355 aa).

Substrate contacts are provided by residues 27–31 (RQAGR), Asp-77, Tyr-154, Thr-209, and His-328.

This sequence belongs to the uroporphyrinogen decarboxylase family. As to quaternary structure, homodimer.

It is found in the cytoplasm. The catalysed reaction is uroporphyrinogen III + 4 H(+) = coproporphyrinogen III + 4 CO2. It participates in porphyrin-containing compound metabolism; protoporphyrin-IX biosynthesis; coproporphyrinogen-III from 5-aminolevulinate: step 4/4. Catalyzes the decarboxylation of four acetate groups of uroporphyrinogen-III to yield coproporphyrinogen-III. The chain is Uroporphyrinogen decarboxylase from Vibrio campbellii (strain ATCC BAA-1116).